Here is a 93-residue protein sequence, read N- to C-terminus: Large ribosomal subunit protein uL23cz/uL23cy (93 aa).

The protein belongs to the universal ribosomal protein uL23 family. Part of the 50S ribosomal subunit.

It localises to the plastid. The protein localises to the chloroplast. Its function is as follows. Binds to 23S rRNA. This Helianthus annuus (Common sunflower) protein is Large ribosomal subunit protein uL23cz/uL23cy (rpl23-A).